A 427-amino-acid chain; its full sequence is Enolase (427 aa).

Q163 serves as a coordination point for (2R)-2-phosphoglycerate. The Proton donor role is filled by E205. The Mg(2+) site is built by D242, E285, and D312. K337, R366, S367, and K388 together coordinate (2R)-2-phosphoglycerate. K337 functions as the Proton acceptor in the catalytic mechanism.

The protein belongs to the enolase family. Mg(2+) is required as a cofactor.

The protein resides in the cytoplasm. It is found in the secreted. Its subcellular location is the cell surface. The catalysed reaction is (2R)-2-phosphoglycerate = phosphoenolpyruvate + H2O. The protein operates within carbohydrate degradation; glycolysis; pyruvate from D-glyceraldehyde 3-phosphate: step 4/5. In terms of biological role, catalyzes the reversible conversion of 2-phosphoglycerate (2-PG) into phosphoenolpyruvate (PEP). It is essential for the degradation of carbohydrates via glycolysis. This is Enolase from Bradyrhizobium diazoefficiens (strain JCM 10833 / BCRC 13528 / IAM 13628 / NBRC 14792 / USDA 110).